Reading from the N-terminus, the 2554-residue chain is MGSLSAVPATNGNHAALNGSASTNGQHVNGSTHVNGNHSLNGSAQVNGHSATTANLEPIAVVGMSCRLPGDATDTQKLWELITKGRSAWSKVPTDRWNQEAFHDPAAEGKPGRTSTDGGHFLKDDIKAFDASFFGVNPIEATAMDPQQRLVLEIAYEAFENAGLTLQQLSGSNTGVYVGLWASDYQEMLLRDIDFPPIYQASGVGAAIASNRVSYCFNLHGPSLTLDTGCSASLVALHQAVHSLRAGETDKCFVAGVNLQLDPQRYGYQNKLSMFSKQGKSFTFDHRAKGASGYGRGEGCSGVVLMPLSKAQKQGFPIRAVIRNSVANQDGKTNGITVPSAAAQSAAIEKAYAQVGLTPYADYVEAHGTGTTVGDPIEAKAIAKVLGAGRQSDSPLPIGSLKANIGHTESAAGLTGLVKAVLMLENNMIPPQVNYEKPNPEIDLDALNLRIPISLENKPLKRISVNSFGYGGTNAHVVVDAADAIPIKPTNTDSQETKDTLRVREQLFVLSAASEKSSQDLVLNVAKYLESKADAADTDALLSRLAYTLSRRTVMENRIGVVASDLADLVEQLTKLSSEGIPRADRQTSPRIGFVFSGQGAQYPRMGQSLLGTWPTFTSSMKRAAECVKACGSSWDLLEELLKDASESRMEDPCIAQPMSTAVQISLVDALKDLGVIPTAVVGHSSGEIAAAYCAEAISFEDAMTVSYHRGRLTSELRLENKGKAGSMIAVGASAATVKQSIDQLGTAAANRITIACHNSPASVTVSGDADVIESLKQRLDEQDIWNRLLRTGGAAYHSPQMLQIAQKYHEAIKDVSGSVPASNVAMASSVTGEDQGDKPITRDYWVHNLVSPVRFTDALKKTCVGENGTRKVDLLLELGSHFQLESPIKQTLRTFTGEAAKVHYTGSLKRGEDAQLSMLQMLRSLYLQKSPVAFWKVNAGFGATFQLLTDLPPYPFDHSKTYWHEGRVSRAYKHRQNLPHELLGTLVHDNNPQEPRWRCLLNLKDVPWLSGHIIQGQTIFPATAYLSMVFQAARQDMAARNPQASINRFILRNVTFSQALVMENNKTDLEISLSLRPQAISARKSSQQWQEFRIFSTSADDVWIEHVRGLVQVILKSEAVQEDSFVPTRITLPPHAQHIPANQFYHRARDIGVNWSAPFDNLNDIKIAAGSCIADSSFVAGPSAGACEKDYVIHPGVMDAILYHGMMGVLIFDENDKSPVVPTFIEKMIVAEQDQAKPIEEVTCHAARTESALTFDIGIFEKNHEDNMVLQAWGVVATKLPDVSIGEGRKRDLCHVPDWATYLPKTTQEYIDGLCKKSLDDRSIIPEIKALEAMTVHYVKQALASTPEDEVAEGYQRNWYNWMKTLADQEPDPEYLKAGEEDDSVSAQVARRLGPRLGDILRGTTHSLSILNEDSMLSGLYLEGGNVRCISQIATYMGELGRLNPNMKIVEVGAGTGSATLPVLQALQAPNRVLASQYDFTDISPGFFPAARELLADYEGVVQYKILNAEKTAEENGFEPNSYDVLIASNVLHATPCIDAVLENVKTMLRPGGKLILMEPTENLPHYGLVFGSLAGWWAGVDEGRTLSPMLSRSQWIETLSKNGFINNGPIFEDYPVAEGGSIHVFVSEVPVPASTEAPLDVDIVSYSGEATYTDFAERLQKNLWDRSVQSCNVSSSMSGDKLSVIMPDFVDRVAWDMDGPLFESLRSRVAGSKVIIFVMCTAKSKEKRPSGDWIYGFVRSIRYEYASVRLVTLELESGLEAGVDALKTILNSPTADLSLPLEDIELEYMEREGQIFVSRVRSEPKFDNYVSRDLGRAGSEEALFLNERPMSAELGVPGVLDTIRWVDNPEITGPVDPDCVRLQLCAASINFKDVLVASGQLEGITQMRNDCSGIVLDVGANMTDKFKVGDRVCSLYSQSFTNYPMVHGLCCHVIPDDMDFADAASIPLVWSTVYYCLITIARLQKGESILIHSAAGAVGQASIMLAHHIGAEVFVTCGNDAKVELLNTEFGIPRDHIFSSRTTVFRDKIRAMTNGNGVDVVLNSLGGEMFRESCNTLAAHGRFVEIGRKDLMENALMPMEFLLNNITFSYVDFAHILATRTALASQLLGDVMKLFASGAVQHVRQIKYPISEMASAFRLVQAGKHTGKVILTVEPDVKVQVVPSKPSPVQLKPDATYLVVGGLGGLGKRLVDWTAEKGARNIVIFSRTAQPDADAQSFLDKLVSMGVTVRVEKCDVSSEESVIEALARIQETMPPIRGLFQAAMVLHDILLEHMTVEEWCKVTAPKVQGTWNLHKYLPEDMDFFVMLSSVVSMVGTVGAGNYASACAFQDGIARYRRRLGLTAYAVNIGAIVEAGYVSENPEVAVNLRKNGLGSVAISEFLSHLGDVIQNKTEYSQSSLGILPNGNERGLGEARWANDKRLAQIFGAETQAGNKTVGGGADNVGFALQSATTFQEAQDIICDAIVKQLATILAIQSDDIIPARSLDSYGLDSLVGVELRNWIGAYLQVNLPLLVMWNTSSINELAEIVTKGSRLVKVKVEDTEEEQVDVVKD.

The disordered stretch occupies residues 1–48 (MGSLSAVPATNGNHAALNGSASTNGQHVNGSTHVNGNHSLNGSAQVNG). The span at 8-48 (PATNGNHAALNGSASTNGQHVNGSTHVNGNHSLNGSAQVNG) shows a compositional bias: polar residues. The Ketosynthase family 3 (KS3) domain occupies 56 to 481 (LEPIAVVGMS…GTNAHVVVDA (426 aa)). Residues Cys230, His367, and His407 each act as for beta-ketoacyl synthase activity in the active site. The tract at residues 595–913 (VFSGQGAQYP…HYTGSLKRGE (319 aa)) is malonyl-CoA:ACP transacylase (MAT) domain. The N-terminal hotdog fold stretch occupies residues 981 to 1119 (HELLGTLVHD…GLVQVILKSE (139 aa)). The dehydratase (DH) domain stretch occupies residues 981–1281 (HELLGTLVHD…QAWGVVATKL (301 aa)). A PKS/mFAS DH domain is found at 981 to 1287 (HELLGTLVHD…ATKLPDVSIG (307 aa)). Residue His1013 is the Proton acceptor; for dehydratase activity of the active site. Positions 1137-1287 (AQHIPANQFY…ATKLPDVSIG (151 aa)) are C-terminal hotdog fold. Asp1200 serves as the catalytic Proton donor; for dehydratase activity. Residues 1451–1556 (VEVGAGTGSA…KTMLRPGGKL (106 aa)) are methyltransferase (CMet) domain. Residues 1840-2153 (GVLDTIRWVD…AGKHTGKVIL (314 aa)) are enoyl reductase (ER) domain. A ketoreductase (KR) domain region spans residues 2177 to 2353 (ATYLVVGGLG…TAYAVNIGAI (177 aa)). The 78-residue stretch at 2457 to 2534 (EAQDIICDAI…ELAEIVTKGS (78 aa)) folds into the Carrier domain. At Ser2494 the chain carries O-(pantetheine 4'-phosphoryl)serine.

Its pathway is secondary metabolite biosynthesis. Its function is as follows. Highly reducing polyketide synthase; part of the gene cluster that mediates the biosynthesis of the lipopeptide fusaristatin A. Fusaristatin A consists of a polyketide chain linked to three amino acid residues glutamine (Gln), dehydroalanine (dehydro-Ala), and beta-aminoisobutyric acid. The biosynthesis starts with formation of a linear polyketide chain by the highly reducing polyketide synthase PKS6. The gene cluster does not contain an acyl-CoA ligase or an acyl-transferase, and it is therefore predicted that the polyketide is transferred directly to the nonribosomal peptide synthetase NRPS7. Modules 1-3 from NRPS7 incorporate dehydro-Ala, Gln, and beta-aminoisobutyric acid in the compound, which is released by cyclization. The beta-aminoisobutyric acid units are most likely not freely available to the NRPS, but can be synthesized from thymine, which requires a dehydrogenase, a monooxygenase, and an aminotransferase. The fusaristatin A cluster contains a cytochrome P450 monooxygenase (FGSG_08207) and an aminotransferase (FGSG_17085), which theoretically can perform two of the enzymatic steps. The enzymes may however also be involved in biosynthesis of dehydroalanine or modification of the polyketide. The dehydro-Ala residue can be a result of cyclization, where serine is dehydrated. The last gene of the cluster encodes a protein with an A/B barrel domain found in variable enzymes, which hampers functional prediction. The sequence is that of Highly reducing polyketide synthase PKS6 from Gibberella zeae (strain ATCC MYA-4620 / CBS 123657 / FGSC 9075 / NRRL 31084 / PH-1) (Wheat head blight fungus).